We begin with the raw amino-acid sequence, 167 residues long: NADH-quinone oxidoreductase subunit I (167 aa).

2 4Fe-4S ferredoxin-type domains span residues 59-88 (RKYK…IEAQ) and 98-127 (VRYD…EGPN). [4Fe-4S] cluster is bound by residues Cys68, Cys71, Cys74, Cys78, Cys107, Cys110, Cys113, and Cys117.

The protein belongs to the complex I 23 kDa subunit family. NDH-1 is composed of 14 different subunits. Subunits NuoA, H, J, K, L, M, N constitute the membrane sector of the complex. Requires [4Fe-4S] cluster as cofactor.

The protein resides in the cell inner membrane. It catalyses the reaction a quinone + NADH + 5 H(+)(in) = a quinol + NAD(+) + 4 H(+)(out). In terms of biological role, NDH-1 shuttles electrons from NADH, via FMN and iron-sulfur (Fe-S) centers, to quinones in the respiratory chain. The immediate electron acceptor for the enzyme in this species is believed to be ubiquinone. Couples the redox reaction to proton translocation (for every two electrons transferred, four hydrogen ions are translocated across the cytoplasmic membrane), and thus conserves the redox energy in a proton gradient. The sequence is that of NADH-quinone oxidoreductase subunit I from Ehrlichia canis (strain Jake).